A 200-amino-acid chain; its full sequence is MAKVQGDPRRFADTVLEKPFKEALARVEEAREAGLKLVEEAYKSALSAARKRLESRVEEARERLQGLKSKADLEVRTEAERVKDELVSRLIEEALAEFRRRKAGMESYRQYLERVLGSAAGESGGSVAKVLCAPEDEEIVREVLGKLGLDGVSVEAVEGIYGGVVVELAEGARLDYTVNNIIAAEEPRLRRAVKRALFEA.

It belongs to the V-ATPase E subunit family. As to quaternary structure, has multiple subunits with at least A(3), B(3), C, D, E, F, H, I and proteolipid K(x).

The protein resides in the cell membrane. Its function is as follows. Component of the A-type ATP synthase that produces ATP from ADP in the presence of a proton gradient across the membrane. The polypeptide is A-type ATP synthase subunit E (Aeropyrum pernix (strain ATCC 700893 / DSM 11879 / JCM 9820 / NBRC 100138 / K1)).